The chain runs to 79 residues: Small ribosomal subunit protein bS18 (79 aa).

This sequence belongs to the bacterial ribosomal protein bS18 family. Part of the 30S ribosomal subunit. Forms a tight heterodimer with protein bS6.

Its function is as follows. Binds as a heterodimer with protein bS6 to the central domain of the 16S rRNA, where it helps stabilize the platform of the 30S subunit. This is Small ribosomal subunit protein bS18 from Blochmanniella pennsylvanica (strain BPEN).